The sequence spans 439 residues: Glycosyl hydrolase DigH (439 aa).

The N-terminal stretch at 1-27 is a signal peptide; that stretch reads MDICSRNEKLAIRRPAILVALALLLCS. Cys-28 carries N-palmitoyl cysteine lipidation. The S-diacylglycerol cysteine moiety is linked to residue Cys-28. The disordered stretch occupies residues 34–54; sequence ESMVTPPAGSKPPATTQQSSQ.

It belongs to the glycosyl hydrolase-like 10 (GHL10) family.

The protein localises to the cell outer membrane. In terms of biological role, divisome-localized glycosyl hydrolase that cleaves peptide-free (denuded) peptidoglycans. This Escherichia coli O6:H1 (strain CFT073 / ATCC 700928 / UPEC) protein is Glycosyl hydrolase DigH.